The primary structure comprises 256 residues: MGLQLSGLDASDSDQRELIWAKRPWAAFRGSWVNRLGRVESVWDLKGVWADQAHSAVSESQAATSSTTTTATGDTLPEHPNALAYQISSTDKDSYKASTQGSGQTNSQNTSPYLHLIKPKKVTASDKLDDDLKNLLDPNEVRVKLRQSFGTDHSTQPQPQPLKTTTPVFGTNSGNLGSVLSGGGTTQDSSTTNQLSPVQRVSGWLVGQLPSTSDGNTSSTNNLAPNTNTGNEVVGVGDLSKRASIESSRLWIALKP.

Over residues 56–72 (AVSESQAATSSTTTTAT) the composition is skewed to low complexity. Disordered stretches follow at residues 56 to 115 (AVSE…PYLH) and 149 to 235 (FGTD…EVVG). The segment covering 96 to 112 (KASTQGSGQTNSQNTSP) has biased composition (polar residues). 2 stretches are compositionally biased toward low complexity: residues 155–179 (TQPQPQPLKTTTPVFGTNSGNLGSV) and 211–222 (STSDGNTSSTNN).

This sequence belongs to the adhesin P1 family.

In Mycoplasma pneumoniae (strain ATCC 29342 / M129 / Subtype 1) (Mycoplasmoides pneumoniae), this protein is Putative adhesin P1-like protein MPN_132.